We begin with the raw amino-acid sequence, 309 residues long: Elongation factor Ts (309 aa).

The interval 98 to 101 is involved in Mg(2+) ion dislocation from EF-Tu; that stretch reads TDFV.

It belongs to the EF-Ts family.

The protein resides in the cytoplasm. In terms of biological role, associates with the EF-Tu.GDP complex and induces the exchange of GDP to GTP. It remains bound to the aminoacyl-tRNA.EF-Tu.GTP complex up to the GTP hydrolysis stage on the ribosome. The polypeptide is Elongation factor Ts (Orientia tsutsugamushi (strain Boryong) (Rickettsia tsutsugamushi)).